The chain runs to 363 residues: GTPase Obg (363 aa).

The Obg domain maps to 1-159 (MKFLDEAKVY…KTIWLRLKLI (159 aa)). Residues 160 to 327 (ADAGLVGLPN…VLRALRDIIV (168 aa)) enclose the OBG-type G domain. GTP contacts are provided by residues 166–173 (GLPNAGKS), 191–195 (FTTLH), 212–215 (DIPG), 279–282 (SQID), and 308–310 (SAV). Mg(2+) is bound by residues Ser173 and Thr193. The tract at residues 332–363 (EEKPAKAPKLRHRDMIVSEENNQGEDGADDQP) is disordered. A compositionally biased stretch (acidic residues) spans 353 to 363 (NQGEDGADDQP).

It belongs to the TRAFAC class OBG-HflX-like GTPase superfamily. OBG GTPase family. Monomer. It depends on Mg(2+) as a cofactor.

It is found in the cytoplasm. Its function is as follows. An essential GTPase which binds GTP, GDP and possibly (p)ppGpp with moderate affinity, with high nucleotide exchange rates and a fairly low GTP hydrolysis rate. Plays a role in control of the cell cycle, stress response, ribosome biogenesis and in those bacteria that undergo differentiation, in morphogenesis control. The chain is GTPase Obg from Rhizobium etli (strain ATCC 51251 / DSM 11541 / JCM 21823 / NBRC 15573 / CFN 42).